Consider the following 438-residue polypeptide: Aspartate--tRNA(Asp/Asn) ligase (438 aa).

L-aspartate is bound at residue glutamate 176. The interval 198–201 (QLYK) is aspartate. Arginine 220 contributes to the L-aspartate binding site. Residues 220–222 (RAE), 228–230 (RHL), and glutamate 361 each bind ATP. Residues glutamate 361 and serine 364 each contribute to the Mg(2+) site. L-aspartate-binding residues include serine 364 and arginine 368. Residue 409–412 (GADR) participates in ATP binding.

Belongs to the class-II aminoacyl-tRNA synthetase family. Type 2 subfamily. Homodimer. It depends on Mg(2+) as a cofactor.

It localises to the cytoplasm. The catalysed reaction is tRNA(Asx) + L-aspartate + ATP = L-aspartyl-tRNA(Asx) + AMP + diphosphate. In terms of biological role, aspartyl-tRNA synthetase with relaxed tRNA specificity since it is able to aspartylate not only its cognate tRNA(Asp) but also tRNA(Asn). Reaction proceeds in two steps: L-aspartate is first activated by ATP to form Asp-AMP and then transferred to the acceptor end of tRNA(Asp/Asn). The chain is Aspartate--tRNA(Asp/Asn) ligase from Methanocaldococcus jannaschii (strain ATCC 43067 / DSM 2661 / JAL-1 / JCM 10045 / NBRC 100440) (Methanococcus jannaschii).